A 232-amino-acid chain; its full sequence is MKIAIIQFGGTNCDMDVLHVLKDVVGVDAETVWYKEESLTGFDGVVVPGGFSYGDYLRAGAIAARTPIMDSIKKIASEGKPVLGICNGFQILTEARLLEGALTTNEYPKFRCHWTNLRVETANTPFTSKFRKGEVIKLPIAHMEGKFYAEEATLAELDENEQVVFRYVDEKGRLTDKANPNGSLENIAGIVNSSRNVLGLMPHPERASESILGSDEGRKVFESMADYITENF.

The 231-residue stretch at 2-232 (KIAIIQFGGT…SMADYITENF (231 aa)) folds into the Glutamine amidotransferase type-1 domain. C86 functions as the Nucleophile in the catalytic mechanism. Active-site residues include H203 and E205.

As to quaternary structure, part of the FGAM synthase complex composed of 1 PurL, 1 PurQ and 2 PurS subunits.

The protein resides in the cytoplasm. It carries out the reaction N(2)-formyl-N(1)-(5-phospho-beta-D-ribosyl)glycinamide + L-glutamine + ATP + H2O = 2-formamido-N(1)-(5-O-phospho-beta-D-ribosyl)acetamidine + L-glutamate + ADP + phosphate + H(+). The catalysed reaction is L-glutamine + H2O = L-glutamate + NH4(+). Its pathway is purine metabolism; IMP biosynthesis via de novo pathway; 5-amino-1-(5-phospho-D-ribosyl)imidazole from N(2)-formyl-N(1)-(5-phospho-D-ribosyl)glycinamide: step 1/2. Its function is as follows. Part of the phosphoribosylformylglycinamidine synthase complex involved in the purines biosynthetic pathway. Catalyzes the ATP-dependent conversion of formylglycinamide ribonucleotide (FGAR) and glutamine to yield formylglycinamidine ribonucleotide (FGAM) and glutamate. The FGAM synthase complex is composed of three subunits. PurQ produces an ammonia molecule by converting glutamine to glutamate. PurL transfers the ammonia molecule to FGAR to form FGAM in an ATP-dependent manner. PurS interacts with PurQ and PurL and is thought to assist in the transfer of the ammonia molecule from PurQ to PurL. The chain is Phosphoribosylformylglycinamidine synthase subunit PurQ from Methanosarcina mazei (strain ATCC BAA-159 / DSM 3647 / Goe1 / Go1 / JCM 11833 / OCM 88) (Methanosarcina frisia).